The chain runs to 54 residues: Light-harvesting protein B-800/850 alpha chain (54 aa).

At 1-14 the chain is on the cytoplasmic side; it reads MTNGKIWLVVKPTV. Residues 15–35 traverse the membrane as a helical segment; it reads GVPLFLSAAVIASVVIHAAVL. Histidine 31 lines the a bacteriochlorophyll pocket. The Periplasmic portion of the chain corresponds to 36-54; the sequence is TTTTWLPAYYQGSAAVAAE.

This sequence belongs to the antenna complex alpha subunit family. The core complex is formed by different alpha and beta chains, binding bacteriochlorophyll molecules, and arranged most probably in tetrameric structures disposed around the reaction center. The non-pigmented gamma chains may constitute additional components.

Its subcellular location is the cell inner membrane. Functionally, antenna complexes are light-harvesting systems, which transfer the excitation energy to the reaction centers. The polypeptide is Light-harvesting protein B-800/850 alpha chain (pucA) (Cereibacter sphaeroides (Rhodobacter sphaeroides)).